We begin with the raw amino-acid sequence, 303 residues long: MATH domain and coiled-coil domain-containing protein At3g58250 (303 aa).

Positions 8–135 (KKKFSWVIKN…KGELKIVVEI (128 aa)) constitute an MATH domain. Residues 231 to 287 (KLDWLKKKLDQVTQKKEKEAAGETRMHEIGEELKDLKLKCSDLEAQLDKEKADVLAA) adopt a coiled-coil conformation.

The protein is MATH domain and coiled-coil domain-containing protein At3g58250 of Arabidopsis thaliana (Mouse-ear cress).